The sequence spans 336 residues: F420-dependent glucose-6-phosphate dehydrogenase (336 aa).

Position 39 (Asp39) interacts with coenzyme F420-(gamma-Glu)n. His40 (proton donor) is an active-site residue. Coenzyme F420-(gamma-Glu)n is bound by residues Thr76 and 107 to 108 (TG). Catalysis depends on Glu109, which acts as the Proton acceptor. Residues Asn112, 177-178 (GG), and 180-181 (VV) contribute to the coenzyme F420-(gamma-Glu)n site. 4 residues coordinate substrate: Thr195, Lys198, Lys259, and Arg283.

The protein belongs to the F420-dependent glucose-6-phosphate dehydrogenase family. As to quaternary structure, homodimer.

The enzyme catalyses oxidized coenzyme F420-(gamma-L-Glu)(n) + D-glucose 6-phosphate + H(+) = 6-phospho-D-glucono-1,5-lactone + reduced coenzyme F420-(gamma-L-Glu)(n). Catalyzes the coenzyme F420-dependent oxidation of glucose 6-phosphate (G6P) to 6-phosphogluconolactone. Appears to have a role in resistance to oxidative stress, via its consumption of G6P that serves as a source of reducing power to combat oxidative stress in mycobacteria. Cannot use NAD, NADP, FAD or FMN instead of coenzyme F420 as an electron acceptor. Exhibits nearly no activity with D-mannose-6-phosphate or D-fructose-6-phosphate as substrate. In Mycolicibacterium smegmatis (strain ATCC 700084 / mc(2)155) (Mycobacterium smegmatis), this protein is F420-dependent glucose-6-phosphate dehydrogenase (fgd).